A 149-amino-acid polypeptide reads, in one-letter code: Transcriptional repressor NrdR (149 aa).

Residues C3 to C34 fold into a zinc finger. The ATP-cone domain occupies P49–E139.

It belongs to the NrdR family. Requires Zn(2+) as cofactor.

Negatively regulates transcription of bacterial ribonucleotide reductase nrd genes and operons by binding to NrdR-boxes. This Pectobacterium carotovorum subsp. carotovorum (strain PC1) protein is Transcriptional repressor NrdR.